Consider the following 192-residue polypeptide: uncharacterized protein (192 aa).

The Nudix hydrolase domain occupies 29–160; the sequence is HRQAAVLIPI…PLDIYRRGDS (132 aa). The short motif at 67–89 is the Nudix box element; the sequence is GAVDDTDTSVIAAALREAEEEVA. Residues Glu-83 and Glu-87 each coordinate Mg(2+).

The protein belongs to the Nudix hydrolase family. PCD1 subfamily. Mn(2+) serves as cofactor. Requires Mg(2+) as cofactor.

Functionally, probably mediates the hydrolysis of some nucleoside diphosphate derivatives. This is an uncharacterized protein from Escherichia fergusonii (strain ATCC 35469 / DSM 13698 / CCUG 18766 / IAM 14443 / JCM 21226 / LMG 7866 / NBRC 102419 / NCTC 12128 / CDC 0568-73).